The following is a 246-amino-acid chain: Triosephosphate isomerase (246 aa).

9–11 (NWK) lines the substrate pocket. His99 acts as the Electrophile in catalysis. Residue Glu168 is the Proton acceptor of the active site. Substrate is bound by residues Gly174, Ser207, and 228-229 (GG).

It belongs to the triosephosphate isomerase family. As to quaternary structure, homodimer.

It is found in the cytoplasm. The catalysed reaction is D-glyceraldehyde 3-phosphate = dihydroxyacetone phosphate. It functions in the pathway carbohydrate biosynthesis; gluconeogenesis. The protein operates within carbohydrate degradation; glycolysis; D-glyceraldehyde 3-phosphate from glycerone phosphate: step 1/1. Functionally, involved in the gluconeogenesis. Catalyzes stereospecifically the conversion of dihydroxyacetone phosphate (DHAP) to D-glyceraldehyde-3-phosphate (G3P). This is Triosephosphate isomerase from Prochlorococcus marinus (strain NATL2A).